The primary structure comprises 185 residues: Ribosome-recycling factor (185 aa).

The protein belongs to the RRF family.

The protein resides in the cytoplasm. Responsible for the release of ribosomes from messenger RNA at the termination of protein biosynthesis. May increase the efficiency of translation by recycling ribosomes from one round of translation to another. The sequence is that of Ribosome-recycling factor from Saccharophagus degradans (strain 2-40 / ATCC 43961 / DSM 17024).